The chain runs to 505 residues: Flagellin (505 aa).

It belongs to the bacterial flagellin family.

The protein resides in the secreted. The protein localises to the bacterial flagellum. Its function is as follows. Flagellin is the subunit protein which polymerizes to form the filaments of bacterial flagella. This is Flagellin (fliC) from Salmonella senftenberg.